The chain runs to 288 residues: Eukaryotic translation initiation factor 3 subunit G (288 aa).

The disordered stretch occupies residues 1–33 (MSRVANNRDWADDEDLEDSNELPQSTTTTNKDG). Residues 11–20 (ADDEDLEDSN) are compositionally biased toward acidic residues. The span at 21-33 (ELPQSTTTTNKDG) shows a compositional bias: polar residues. Residues 208–286 (ATLRVTNVSE…LILRVEFAKK (79 aa)) enclose the RRM domain.

This sequence belongs to the eIF-3 subunit G family. Component of the eukaryotic translation initiation factor 3 (eIF-3) complex.

It localises to the cytoplasm. Its function is as follows. RNA-binding component of the eukaryotic translation initiation factor 3 (eIF-3) complex, which is involved in protein synthesis of a specialized repertoire of mRNAs and, together with other initiation factors, stimulates binding of mRNA and methionyl-tRNAi to the 40S ribosome. The eIF-3 complex specifically targets and initiates translation of a subset of mRNAs involved in cell proliferation. This subunit can bind 18S rRNA. The sequence is that of Eukaryotic translation initiation factor 3 subunit G (tif35) from Sclerotinia sclerotiorum (strain ATCC 18683 / 1980 / Ss-1) (White mold).